An 810-amino-acid chain; its full sequence is Plasminogen (810 aa).

An N-terminal signal peptide occupies residues 1-19 (MEHKEVVLLLLLFLKSGQG). Positions 20–98 (EPLDDYVNTQ…RDVVLFEKKV (79 aa)) constitute a PAN domain. Intrachain disulfides connect cysteine 49/cysteine 73, cysteine 53/cysteine 61, cysteine 103/cysteine 181, cysteine 124/cysteine 164, cysteine 152/cysteine 176, cysteine 185/cysteine 262, cysteine 188/cysteine 316, cysteine 206/cysteine 245, cysteine 234/cysteine 257, cysteine 275/cysteine 352, cysteine 296/cysteine 335, and cysteine 324/cysteine 347. Kringle domains follow at residues 103-181 (CKTG…ILEC) and 184-262 (ECMH…IPRC). Residues 126–145 (KWSSTSPHRPRFSPATHPSE) form a disordered region. Residues arginine 136, aspartate 158, and arginine 172 each contribute to the L-lysine site. The O-linked (GalNAc...) serine glycan is linked to serine 268. One can recognise a Kringle 3 domain in the interval 275-352 (CLKGTGENYR…RWEYCKIPSC (78 aa)). N-linked (GlcNAc...) asparagine glycosylation occurs at asparagine 308. An O-linked (GalNAc...) threonine glycan is attached at threonine 365. Disulfide bonds link cysteine 377-cysteine 454, cysteine 398-cysteine 437, cysteine 426-cysteine 449, cysteine 481-cysteine 560, cysteine 502-cysteine 543, cysteine 531-cysteine 555, cysteine 567-cysteine 685, cysteine 577-cysteine 585, and cysteine 607-cysteine 623. Kringle domains follow at residues 377–454 (CYHG…LKKC) and 481–560 (CMFG…VPQC). Residues 396–416 (KKCQSWSSMTPHRHQKTPENY) form a disordered region. Positions 432 and 445 each coordinate L-lysine. Residues 581-808 (VVGGCVAHPH…FVTWIEGVMR (228 aa)) enclose the Peptidase S1 domain. Serine 597 carries the phosphoserine modification. Residues histidine 622 and aspartate 665 each act as charge relay system in the active site. Serine 688 bears the Phosphoserine mark. Cystine bridges form between cysteine 699/cysteine 766, cysteine 729/cysteine 745, and cysteine 756/cysteine 784. The Charge relay system role is filled by serine 760.

It belongs to the peptidase S1 family. Plasminogen subfamily. As to quaternary structure, interacts (both mature PLG and the angiostatin peptide) with CSPG4 and AMOT. Interacts (via the Kringle domains) with HRG; the interaction tethers PLG to the cell surface and enhances its activation. Interacts (via Kringle 4 domain) with ADA; the interaction stimulates PLG activation when in complex with DPP4. Angiostatin: Interacts with ATP5F1A; the interaction inhibits most of the angiogenic effects of angiostatin. Interacts (plasmin) with iripin-8, a serine protease inhibitor from Ixodes ricinus saliva. Interacts (plasmin) with iripin-1, a serine protease inhibitor from Ixodes ricinus saliva. Interacts (plasmin) with Kazal-type trypsin inhibitor, a serine protease inhibitor from Aedes aegypti. In terms of assembly, (Microbial infection) Interacts with C.albicans GPD2; the interaction is direct and provides active plasmin on the surface of fungal cells. (Microbial infection) Interacts with Staphylococcus aureus protein FnbB; this interaction provides active plasmin on the surface of bacterial cells. As to quaternary structure, (Microbial infection) Interacts with P.falciparum (strain NF54) enolase ENO (via DKSLVK motif); the interaction occurs at the ookinete cell surface and is required for ookinete invasion of the mosquito midgut. In terms of assembly, (Microbial infection) Interacts with B.burgdorferi OspC. N-linked glycan contains N-acetyllactosamine and sialic acid. O-linked glycans consist of Gal-GalNAc disaccharide modified with up to 2 sialic acid residues (microheterogeneity). Post-translationally, in the presence of the inhibitor, the activation involves only cleavage after Arg-580, yielding two chains held together by two disulfide bonds. In the absence of the inhibitor, the activation involves additionally the removal of the activation peptide. In terms of processing, (Microbial infection) The Y.pestis Pla protein cleaves between Arg-580 and Val-581, generating plasmin which facilitates bacterial migration and infection. In terms of tissue distribution, present in plasma and many other extracellular fluids. It is synthesized in the liver.

Its subcellular location is the secreted. The catalysed reaction is Preferential cleavage: Lys-|-Xaa &gt; Arg-|-Xaa, higher selectivity than trypsin. Converts fibrin into soluble products.. With respect to regulation, converted into plasmin by plasminogen activators, both plasminogen and its activator being bound to fibrin. Activated with catalytic amounts of streptokinase. Plasmin activity inhibited by SERPINE2. Functionally, plasmin dissolves the fibrin of blood clots and acts as a proteolytic factor in a variety of other processes including embryonic development, tissue remodeling, tumor invasion, and inflammation. In ovulation, weakens the walls of the Graafian follicle. It activates the urokinase-type plasminogen activator, collagenases and several complement zymogens, such as C1, C4 and C5. Cleavage of fibronectin and laminin leads to cell detachment and apoptosis. Also cleaves fibrin, thrombospondin and von Willebrand factor. Its role in tissue remodeling and tumor invasion may be modulated by CSPG4. Binds to cells. Angiostatin is an angiogenesis inhibitor that blocks neovascularization and growth of experimental primary and metastatic tumors in vivo. Its function is as follows. (Microbial infection) ENO/enoloase from parasite P.falciparum (strain NF54) interacts with PLG present in the mosquito blood meal to promote the invasion of the mosquito midgut by the parasite ookinete. The catalytic active form, plasmin, is essential for the invasion of the mosquito midgut. In terms of biological role, (Microbial infection) Binds to OspC on the surface of B.burgdorferi cells, possibly conferring an extracellular protease activity on the bacteria that allows it to traverse host tissue. Functionally, (Microbial infection) Interacts with dengue virus type 2 particles. Enhances dengue virus type 2 infection in Aedes aegypti mosquito midgut by increasing midgut internalization, resulting in higher infection rates and viral dissemination in mosquitoes. In Homo sapiens (Human), this protein is Plasminogen (PLG).